A 161-amino-acid chain; its full sequence is Small ribosomal subunit protein uS9 (161 aa).

This sequence belongs to the universal ribosomal protein uS9 family.

In Bartonella bacilliformis (strain ATCC 35685 / KC583 / Herrer 020/F12,63), this protein is Small ribosomal subunit protein uS9.